Consider the following 152-residue polypeptide: Cytosolic calcium-binding protein 1 (152 aa).

A run of 7 repeats spans residues 57 to 62 (VEETEK), 67 to 71 (TEEAQ), 78 to 82 (VEIKK), 104 to 108 (VEAKK), 112 to 116 (VEEKK), 124 to 129 (VEEEKK), and 131 to 136 (EAEEEK). The segment at 57–136 (VEETEKPIEE…EKKPEAEEEK (80 aa)) is 7 X 5 AA approximate repeats of V-E-E-K-K. Residues 60–152 (TEKPIEETEE…VTAPVEKADE (93 aa)) are disordered. Over residues 96 to 138 (DESKTEEVVEAKKEEEVEEKKTEEAPVVVEEEKKPEAEEEKPA) the composition is skewed to basic and acidic residues.

Predominantly expressed in petioles (at protein level). Mainly observed in shoots, flowers, siliques and roots, and, to a lower extent, in stems and leaves.

The protein resides in the cytoplasm. The protein localises to the cytosol. Its function is as follows. Binds calcium Ca(2+) and may act as a signal mediator to buffer Ca(2+). This Arabidopsis thaliana (Mouse-ear cress) protein is Cytosolic calcium-binding protein 1.